The primary structure comprises 241 residues: 4-hydroxy-tetrahydrodipicolinate reductase (241 aa).

Residues 7–12 (GVNGHM), 74–76 (GTT), and 98–101 (STNM) each bind NAD(+). The active-site Proton donor/acceptor is the His131. Residue His132 coordinates (S)-2,3,4,5-tetrahydrodipicolinate. Lys135 (proton donor) is an active-site residue. 141–142 (GS) lines the (S)-2,3,4,5-tetrahydrodipicolinate pocket.

The protein belongs to the DapB family.

Its subcellular location is the cytoplasm. It carries out the reaction (S)-2,3,4,5-tetrahydrodipicolinate + NAD(+) + H2O = (2S,4S)-4-hydroxy-2,3,4,5-tetrahydrodipicolinate + NADH + H(+). The catalysed reaction is (S)-2,3,4,5-tetrahydrodipicolinate + NADP(+) + H2O = (2S,4S)-4-hydroxy-2,3,4,5-tetrahydrodipicolinate + NADPH + H(+). The protein operates within amino-acid biosynthesis; L-lysine biosynthesis via DAP pathway; (S)-tetrahydrodipicolinate from L-aspartate: step 4/4. Catalyzes the conversion of 4-hydroxy-tetrahydrodipicolinate (HTPA) to tetrahydrodipicolinate. This is 4-hydroxy-tetrahydrodipicolinate reductase from Alkaliphilus oremlandii (strain OhILAs) (Clostridium oremlandii (strain OhILAs)).